The sequence spans 666 residues: MGQTKSKIKSKYASYLSFIKILLKRGGVKVSTKNLIKLFQIIEQFCPWFPEQGTLDLKDWKRIGKELKQAGRKGNIIPLTVWNDWAIIKAALEPFQTEEDSVSVSDAPGSCIIDCNENTRKKSQKETESLHCEYVAEPVMAQSTQNVDYNQLQEVIYPETLKLEGKVPELVGPSESKPRGTSRLPAGQVPVTLQPQTQVKENKTQPPVAYQYWPPAELQYRPPLESQYGYPGMPPAPQGRAPYPQPPTRRLNPTAPPSRRGSELHEIIDKSRKEGDTEAWQFPVTLEPMPPGEGAQEGEPPTVEARYKSFSIKMLKDMKEGVKQYGPNSPYMRTLLDSIAHGHRLIPYDWEILAKSSLSPSQFLQFKTWWIDGVQEQVRRNRAANPPVNIDADQLLGIGQNWSTISQQALMQNEAIEQVRAICLRAWEKIQDPGSTCPSFNTVRQGSKEPYPDFVARLQDVAQKSIAIEKARKVIVELMAYENPNPECQSAIKPLKGKVPAGSDVISEYVKACDGMGGAMHKAMLMAQAITGVVLGGQVRTFGGKCYNCGQIGHLKKNCPVLNKQNITIQATTTGREPPDLCPRCKKGKHWASQCRSKFDKNGQPLSGNEQRGQPQAPQQTGAFPIQPFVPHGFQGQQPPLSQVFQGISQLPQYNNCPPPQAAVQQ.

Residue Gly-2 is the site of N-myristoyl glycine attachment. Disordered regions lie at residues Leu-170–Val-189 and Pro-223–Leu-264. The span at Gly-232–Pro-247 shows a compositional bias: pro residues. CCHC-type zinc fingers lie at residues Gly-544 to Val-561 and Asp-580 to Ser-597. The segment at Lys-598–Pro-640 is disordered. A compositionally biased stretch (polar residues) spans Gln-604–Gly-622.

It belongs to the beta type-B retroviral Gag protein family. HERV class-II K(HML-2) gag subfamily. Myristoylation is essential for retroviral assembly. Alteration of the glycine residue leads to a block in the budding of particles and an accumulation of Gag inside the cell. In terms of processing, specific enzymatic cleavages may yield mature proteins.

The protein resides in the cell membrane. Its function is as follows. The products of the Gag polyproteins of infectious retroviruses perform highly complex orchestrated tasks during the assembly, budding, maturation, and infection stages of the viral replication cycle. During viral assembly, the proteins form membrane associations and self-associations that ultimately result in budding of an immature virion from the infected cell. Gag precursors also function during viral assembly to selectively bind and package two plus strands of genomic RNA. Endogenous Gag proteins may have kept, lost or modified their original function during evolution. The sequence is that of Endogenous retrovirus group K member 19 Gag polyprotein (ERVK-19) from Homo sapiens (Human).